Reading from the N-terminus, the 741-residue chain is MALFTPWKLSSQKLGFFLVTFGFIWGMMLLHFTIQQRTQPESSSMLREQILDLSKRYIKALAEENRNVVDGPYAGVMTAYDLKKTLAVLLDNILQRIGKLESKVDNLVVNGTGTNSTNSTTAVPSLVALEKINVADIINGAQEKCVLPPMDGYPHCEGKIKWMKDMWRSDPCYADYGVDGSTCSFFIYLSEVENWCPHLPWRAKNPYEEADHNSLAEIRTDFNILYSMMKKHEEFRWMRLRIRRMADAWIQAIKSLAEKQNLEKRKRKKVLVHLGLLTKESGFKIAETAFSGGPLGELVQWSDLITSLYLLGHDIRISASLAELKEIMKKVVGNRSGCPTVGDRIVELIYIDIVGLAQFKKTLGPSWVHYQCMLRVLDSFGTEPEFNHANYAQSKGHKTPWGKWNLNPQQFYTMFPHTPDNSFLGFVVEQHLNSSDIHHINEIKRQNQSLVYGKVDSFWKNKKIYLDIIHTYMEVHATVYGSSTKNIPSYVKNHGILSGRDLQFLLRETKLFVGLGFPYEGPAPLEAIANGCAFLNPKFNPPKSSKNTDFFIGKPTLRELTSQHPYAEVFIGRPHVWTVDLNNQEEVEDAVKAILNQKIEPYMPYEFTCEGMLQRINAFIEKQDFCHGQVMWPPLSALQVKLAEPGQSCKQVCQESQLICEPSFFQHLNKDKDMLKYKVTCQSSELAKDILVPSFDPKNKHCVFQGDLLLFSCAGAHPRHQRVCPCRDFIKGQVALCKDCL.

Over 1–13 (MALFTPWKLSSQK) the chain is Cytoplasmic. Residues 14-30 (LGFFLVTFGFIWGMMLL) traverse the membrane as a helical; Signal-anchor for type II membrane protein segment. Topologically, residues 31–741 (HFTIQQRTQP…GQVALCKDCL (711 aa)) are lumenal. N-linked (GlcNAc...) asparagine glycosylation is found at Asn110, Asn115, and Asn118. Intrachain disulfides connect Cys145/Cys183, Cys156/Cys196, Cys172/Cys338, Cys372/Cys626, Cys649/Cys724, Cys653/Cys726, Cys660/Cys713, Cys681/Cys702, and Cys737/Cys740. Positions 213 to 741 (NSLAEIRTDF…GQVALCKDCL (529 aa)) are sufficient for catalytic activity. Residues 264 to 269 (KRKRKK) form an important for activity in FGF2 release region. Asn334 carries an N-linked (GlcNAc...) asparagine glycan. Residue 378 to 379 (DS) participates in substrate binding. 2 N-linked (GlcNAc...) asparagine glycosylation sites follow: Asn433 and Asn447. Glu526 serves as a coordination point for UDP-N-acetyl-alpha-D-glucosamine. Lys554 is a binding site for substrate.

Belongs to the glycosyltransferase 18 family. N-glycosylated. Post-translationally, a secreted form is released from the membrane after cleavage by gamma-secretase.

It is found in the golgi apparatus membrane. Its subcellular location is the secreted. The catalysed reaction is N(4)-{beta-D-GlcNAc-(1-&gt;2)-[beta-D-GlcNAc-(1-&gt;4)]-alpha-D-Man-(1-&gt;3)-[beta-D-GlcNAc-(1-&gt;2)-alpha-D-Man-(1-&gt;6)]-beta-D-Man-(1-&gt;4)-beta-D-GlcNAc-(1-&gt;4)-beta-D-GlcNAc}-L-asparaginyl-[protein] + UDP-N-acetyl-alpha-D-glucosamine = N(4)-{beta-D-GlcNAc-(1-&gt;2)-[beta-D-GlcNAc-(1-&gt;4)]-alpha-D-Man-(1-&gt;3)-[beta-D-GlcNAc-(1-&gt;2)-[beta-D-GlcNAc-(1-&gt;6)]-alpha-D-Man-(1-&gt;6)]-beta-D-Man-(1-&gt;4)-beta-D-GlcNAc-(1-&gt;4)-beta-D-GlcNAc}-L-asparaginyl-[protein] + UDP + H(+). The protein operates within protein modification; protein glycosylation. With respect to regulation, activity is increased by Mn(2+) and Mg(2+). Catalyzes the addition of N-acetylglucosamine (GlcNAc) in beta 1-6 linkage to the alpha-linked mannose of biantennary N-linked oligosaccharides. Catalyzes an important step in the biosynthesis of branched, complex-type N-glycans, such as those found on EGFR, TGFR (TGF-beta receptor) and CDH2. Via its role in the biosynthesis of complex N-glycans, plays an important role in the activation of cellular signaling pathways, reorganization of the actin cytoskeleton, cell-cell adhesion and cell migration. MGAT5-dependent EGFR N-glycosylation enhances the interaction between EGFR and LGALS3 and thereby prevents rapid EGFR endocytosis and prolongs EGFR signaling. Required for efficient interaction between TGFB1 and its receptor. Enhances activation of intracellular signaling pathways by several types of growth factors, including FGF2, PDGF, IGF, TGFB1 and EGF. MGAT5-dependent CDH2 N-glycosylation inhibits CDH2-mediated homotypic cell-cell adhesion and contributes to the regulation of downstream signaling pathways. Promotes cell migration. Contributes to the regulation of the inflammatory response. MGAT5-dependent TCR N-glycosylation enhances the interaction between TCR and LGALS3, limits agonist-induced TCR clustering, and thereby dampens TCR-mediated responses to antigens. Required for normal leukocyte evasation and accumulation at sites of inflammation. Inhibits attachment of monocytes to the vascular endothelium and subsequent monocyte diapedesis. In terms of biological role, promotes proliferation of umbilical vein endothelial cells and angiogenesis, at least in part by promoting the release of the growth factor FGF2 from the extracellular matrix. This chain is Alpha-1,6-mannosylglycoprotein 6-beta-N-acetylglucosaminyltransferase A (MGAT5), found in Homo sapiens (Human).